Consider the following 130-residue polypeptide: Small ribosomal subunit protein uS8 (130 aa).

This sequence belongs to the universal ribosomal protein uS8 family. In terms of assembly, part of the 30S ribosomal subunit.

One of the primary rRNA binding proteins, it binds directly to 16S rRNA central domain where it helps coordinate assembly of the platform of the 30S subunit. This is Small ribosomal subunit protein uS8 from Korarchaeum cryptofilum (strain OPF8).